The sequence spans 81 residues: Large ribosomal subunit protein bL31B (81 aa).

The protein belongs to the bacterial ribosomal protein bL31 family. Type B subfamily. Part of the 50S ribosomal subunit.

The polypeptide is Large ribosomal subunit protein bL31B (Listeria innocua serovar 6a (strain ATCC BAA-680 / CLIP 11262)).